A 124-amino-acid polypeptide reads, in one-letter code: UPF0299 membrane protein VIBHAR_02118 (124 aa).

4 helical membrane passes run 6 to 26 (LLQL…LGIG), 35 to 55 (VSVP…TLGL), 72 to 92 (MILL…MLLA), and 95 to 115 (LPII…LAWF).

It belongs to the UPF0299 family.

The protein localises to the cell inner membrane. This Vibrio campbellii (strain ATCC BAA-1116) protein is UPF0299 membrane protein VIBHAR_02118.